We begin with the raw amino-acid sequence, 559 residues long: Mercuric reductase (559 aa).

An HMA domain is found at 1–64 (MYLNITGMTC…AVAGLGYKAT (64 aa)). A metal cation-binding residues include Cys-10 and Cys-13. Ala-108, Gly-128, and Thr-133 together coordinate FAD. The cysteines at positions 134 and 139 are disulfide-linked. FAD-binding residues include Lys-143, Ala-209, Asp-401, and Val-409. Positions 556 and 557 each coordinate Hg(2+).

This sequence belongs to the class-I pyridine nucleotide-disulfide oxidoreductase family. As to quaternary structure, homodimer. It depends on FAD as a cofactor.

The catalysed reaction is Hg + NADP(+) + H(+) = Hg(2+) + NADPH. Its function is as follows. Resistance to Hg(2+) in bacteria appears to be governed by a specialized system which includes mercuric reductase. MerA protein is responsible for volatilizing mercury as Hg(0). This is Mercuric reductase (merA) from Alcaligenes sp.